The following is a 1060-amino-acid chain: Histone lysine demethylase PHF8 (1060 aa).

The PHD-type zinc-finger motif lies at 41 to 92; that stretch reads PVYCLCRLPYDVTRFMIECDMCQDWFHGSCVGVEEEKAADIDLYHCPNCEVL. At S69 the chain carries Phosphoserine; by CDK1. Positions 100 to 120 are disordered; the sequence is KRRGSSKGHDTHKGKPVKTGS. A linker region spans residues 101 to 115; it reads RRGSSKGHDTHKGKP. Position 120 is a phosphoserine; by CDK1 (S120). One can recognise a JmjC domain in the interval 231 to 387; that stretch reads FSDTRLSNLV…MQLKAYEIEK (157 aa). T280 contacts substrate. Positions 283 and 285 each coordinate Fe cation. K300 serves as a coordination point for substrate. Residue H355 participates in Fe cation binding. The segment covering 508-517 has biased composition (polar residues); the sequence is AHSTSVSMSR. The interval 508–534 is disordered; it reads AHSTSVSMSRLSLPSKNGSKKKGLKPK. S651 carries the phosphoserine modification. Phosphotyrosine is present on Y704. 2 positions are modified to phosphothreonine: T705 and T706. S722 bears the Phosphoserine mark. 3 disordered regions span residues 768 to 840, 852 to 902, and 915 to 1046; these read QSSS…EQDS, YPSL…GTRV, and KLAQ…KQRL. Low complexity-rich tracts occupy residues 769–778 and 785–804; these read SSSSSPATSS and GGQD…VSNS. Phosphoserine is present on residues S804, S826, S834, S854, S857, and S880. Positions 826–839 are enriched in acidic residues; it reads SEEEEENASLDEQD. Positions 891–900 are enriched in basic and acidic residues; sequence KQDRPVREGT. Basic residues predominate over residues 924 to 934; the sequence is AQKKKYIKKKP. The segment covering 1018–1030 has biased composition (polar residues); the sequence is RRPSVGSQSNQAG.

It belongs to the JHDM1 histone demethylase family. JHDM1D subfamily. As to quaternary structure, interacts with POLR1B, UBTF, SETD1A, HCFC1, E2F1 and ZNF711. Interacts with ZNF263; recruited to the SIX3 promoter along with other proteins involved in chromatin modification and transcriptional corepression where it contributes to transcriptional repression. Requires Fe(2+) as cofactor. In terms of processing, phosphorylation at Ser-69 and Ser-120 are required for dissociation from chromatin and accumulation of H4K20Me1 levels during prophase.

The protein localises to the nucleus. It localises to the nucleolus. The enzyme catalyses N(6),N(6)-dimethyl-L-lysyl(36)-[histone H3] + 2 2-oxoglutarate + 2 O2 = L-lysyl(36)-[histone H3] + 2 formaldehyde + 2 succinate + 2 CO2. It catalyses the reaction N(6),N(6)-dimethyl-L-lysyl(9)-[histone H3] + 2 2-oxoglutarate + 2 O2 = L-lysyl(9)-[histone H3] + 2 formaldehyde + 2 succinate + 2 CO2. Histone lysine demethylase with selectivity for the di- and monomethyl states that plays a key role cell cycle progression, rDNA transcription and brain development. Demethylates mono- and dimethylated histone H3 'Lys-9' residue (H3K9Me1 and H3K9Me2), dimethylated H3 'Lys-27' (H3K27Me2) and monomethylated histone H4 'Lys-20' residue (H4K20Me1). Acts as a transcription activator as H3K9Me1, H3K9Me2, H3K27Me2 and H4K20Me1 are epigenetic repressive marks. Involved in cell cycle progression by being required to control G1-S transition. Acts as a coactivator of rDNA transcription, by activating polymerase I (pol I) mediated transcription of rRNA genes. Required for brain development, probably by regulating expression of neuron-specific genes. Only has activity toward H4K20Me1 when nucleosome is used as a substrate and when not histone octamer is used as substrate. May also have weak activity toward dimethylated H3 'Lys-36' (H3K36Me2), however, the relevance of this result remains unsure in vivo. Specifically binds trimethylated 'Lys-4' of histone H3 (H3K4me3), affecting histone demethylase specificity: has weak activity toward H3K9Me2 in absence of H3K4me3, while it has high activity toward H3K9me2 when binding H3K4me3. Positively modulates transcription of histone demethylase KDM5C, acting synergistically with transcription factor ARX; synergy may be related to enrichment of histone H3K4me3 in regulatory elements. The chain is Histone lysine demethylase PHF8 (PHF8) from Homo sapiens (Human).